The primary structure comprises 208 residues: MKVVEVKHPLIRHKVGLMREADISTKRFRELATEVGSLLTYEATSDFETEKVTIEGWNGPVEIDQIKGKKVTVVPILRAGLGMMDGVLEHIPSARISVVGIYRDEETLEPVPYFEKIVSNVEERIALVVDPMLATGGSMIATIDLLKSKGCTSIKALVLVAAPEGIAALEKAHPDIELYTASIDKCLNEQGYILPGLGDAGDKIFGTK.

Residues Arg-78, Arg-103, and 130 to 138 (DPMLATGGS) contribute to the 5-phospho-alpha-D-ribose 1-diphosphate site. Residues Ile-193 and 198 to 200 (GDA) contribute to the uracil site. Asp-199 contacts 5-phospho-alpha-D-ribose 1-diphosphate.

Belongs to the UPRTase family. It depends on Mg(2+) as a cofactor.

The catalysed reaction is UMP + diphosphate = 5-phospho-alpha-D-ribose 1-diphosphate + uracil. The protein operates within pyrimidine metabolism; UMP biosynthesis via salvage pathway; UMP from uracil: step 1/1. With respect to regulation, allosterically activated by GTP. In terms of biological role, catalyzes the conversion of uracil and 5-phospho-alpha-D-ribose 1-diphosphate (PRPP) to UMP and diphosphate. The chain is Uracil phosphoribosyltransferase from Shewanella denitrificans (strain OS217 / ATCC BAA-1090 / DSM 15013).